We begin with the raw amino-acid sequence, 156 residues long: Oxidized purine nucleoside triphosphate hydrolase (156 aa).

A Nudix hydrolase domain is found at 3-132 (ASRLYTLVLV…WFPLLLQKKK (130 aa)). Threonine 8 is a binding site for 2-oxo-dATP. 8-oxo-dGMP is bound by residues threonine 8 and lysine 23. Threonine 8 and lysine 23 together coordinate 8-oxo-dGTP. Residues threonine 8 and lysine 23 each coordinate N(6)-methyl-AMP. Positions 8 and 23 each coordinate O(6)-methyl-dGMP. 8-oxo-ATP is bound at residue phenylalanine 27. 2-oxo-dATP contacts are provided by residues asparagine 33 and 35 to 38 (FGGK). Asparagine 33 is an 8-oxo-dGMP binding site. Residues asparagine 33 and 35–38 (FGGK) contribute to the 8-oxo-dGTP site. Asparagine 33 is a binding site for O(6)-methyl-dGMP. 8-oxo-ATP-binding positions include 35 to 38 (FGGK) and glutamate 52. 5 residues coordinate Mg(2+): glycine 36, glutamate 52, glutamate 55, glutamate 56, and glutamate 100. The short motif at 37–58 (GKVQEGETIEDGARRELQEESG) is the Nudix box element. An 8-oxo-ATP-binding site is contributed by glutamate 56. A 2-oxo-dATP-binding site is contributed by 117–120 (WPDD). 117-120 (WPDD) provides a ligand contact to 8-oxo-dGMP. 8-oxo-dGTP is bound at residue 117–120 (WPDD). 117–120 (WPDD) is a N(6)-methyl-AMP binding site. 117–120 (WPDD) is an O(6)-methyl-dGMP binding site. Residue 117-120 (WPDD) coordinates 8-oxo-ATP.

It belongs to the Nudix hydrolase family. In terms of assembly, monomer. It depends on Mg(2+) as a cofactor. Post-translationally, the N-terminus is blocked. As to expression, widely expressed with highest expression in thymus, testis, embryo and proliferating blood lymphocytes.

It localises to the cytoplasm. Its subcellular location is the cytosol. The protein resides in the mitochondrion matrix. The protein localises to the nucleus. It catalyses the reaction 2-oxo-dATP + H2O = 2-oxo-dAMP + diphosphate + H(+). It carries out the reaction 2-oxo-ATP + H2O = 2-oxo-AMP + diphosphate + H(+). The enzyme catalyses 8-oxo-dGTP + H2O = 8-oxo-dGMP + diphosphate + H(+). The catalysed reaction is 8-oxo-dATP + H2O = 8-oxo-dAMP + diphosphate + H(+). It catalyses the reaction O(6)-methyl-dGTP + H2O = O(6)-methyl-dGMP + diphosphate + H(+). It carries out the reaction N(6)-methyl-dATP + H2O = N(6)-methyl-dAMP + diphosphate + H(+). The enzyme catalyses N(6)-methyl-ATP + H2O = N(6)-methyl-AMP + diphosphate + H(+). Inhibited by 2-oxo-dADP and 8-oxo-dGDP. Its function is as follows. Oxidized purine nucleoside triphosphate hydrolase which is a prominent sanitizer of the oxidized nucleotide pool. Catalyzes the hydrolysis of 2-oxo-dATP (2-hydroxy-dATP) into 2-oxo-dAMP. Also has a significant hydrolase activity toward 2-oxo-ATP, 8-oxo-dGTP and 8-oxo-dATP. Through the hydrolysis of oxidized purine nucleoside triphosphates, prevents their incorporation into DNA and the subsequent transversions A:T to C:G and G:C to T:A. Also catalyzes the hydrolysis of methylated purine nucleoside triphosphate preventing their integration into DNA. Through this antimutagenic activity protects cells from oxidative stress. This Homo sapiens (Human) protein is Oxidized purine nucleoside triphosphate hydrolase (NUDT1).